Reading from the N-terminus, the 494-residue chain is Cytochrome P450 2A7 (494 aa).

Cys439 provides a ligand contact to heme.

This sequence belongs to the cytochrome P450 family. Requires heme as cofactor.

Its subcellular location is the endoplasmic reticulum membrane. The protein resides in the microsome membrane. The catalysed reaction is an organic molecule + reduced [NADPH--hemoprotein reductase] + O2 = an alcohol + oxidized [NADPH--hemoprotein reductase] + H2O + H(+). Functionally, cytochromes P450 are a group of heme-thiolate monooxygenases. In liver microsomes, this enzyme is involved in an NADPH-dependent electron transport pathway. It oxidizes a variety of structurally unrelated compounds, including steroids, fatty acids, and xenobiotics. In Homo sapiens (Human), this protein is Cytochrome P450 2A7 (CYP2A7).